The following is a 239-amino-acid chain: RNA polymerase sigma factor FliA (239 aa).

Residues 16–88 (LWQRYVPLVR…MLDELRSRDW (73 aa)) form a sigma-70 factor domain-2 region. Residues 43-46 (DLLQ) carry the Interaction with polymerase core subunit RpoC motif. The segment at 96 to 166 (NAREVAQAIG…IELVTDDHQR (71 aa)) is sigma-70 factor domain-3. The sigma-70 factor domain-4 stretch occupies residues 185–233 (AIETLPEREKLVLTLYYQEELNLKEIGAVLEVGESRVSQLHSQAIKRLR). Residues 207-226 (LKEIGAVLEVGESRVSQLHS) constitute a DNA-binding region (H-T-H motif).

Belongs to the sigma-70 factor family. FliA subfamily.

The protein localises to the cytoplasm. In terms of biological role, sigma factors are initiation factors that promote the attachment of RNA polymerase to specific initiation sites and are then released. This sigma factor controls the expression of flagella-related genes. The protein is RNA polymerase sigma factor FliA of Escherichia coli O157:H7.